A 126-amino-acid polypeptide reads, in one-letter code: Fatty acid-binding protein, liver (126 aa).

Cholate contacts are provided by residues 54-56 (TPN), 99-101 (HEQ), and arginine 121.

It belongs to the calycin superfamily. Fatty-acid binding protein (FABP) family.

It localises to the cytoplasm. Its function is as follows. FABPs are thought to play a role in the intracellular transport of long-chain fatty acids and their acyl-CoA esters. The protein is Fatty acid-binding protein, liver of Anolis pulchellus (Common grass anole).